Here is a 139-residue protein sequence, read N- to C-terminus: Large ribosomal subunit protein bL9m (139 aa).

The disordered stretch occupies residues 83–121 (DHQQLSKRHETEVQKNMELRKESVFGHKKEEKPKEEKKG).

It belongs to the bacterial ribosomal protein bL9 family. In terms of assembly, component of the mitochondrial large ribosomal subunit (mt-LSU). Mature yeast 74S mitochondrial ribosomes consist of a small (37S) and a large (54S) subunit. The 37S small subunit contains a 15S ribosomal RNA (15S mt-rRNA) and 34 different proteins. The 54S large subunit contains a 21S rRNA (21S mt-rRNA) and 46 different proteins.

The protein localises to the mitochondrion. Functionally, component of the mitochondrial ribosome (mitoribosome), a dedicated translation machinery responsible for the synthesis of mitochondrial genome-encoded proteins, including at least some of the essential transmembrane subunits of the mitochondrial respiratory chain. The mitoribosomes are attached to the mitochondrial inner membrane and translation products are cotranslationally integrated into the membrane. The sequence is that of Large ribosomal subunit protein bL9m (MRPL50) from Saccharomyces cerevisiae (strain ATCC 204508 / S288c) (Baker's yeast).